The following is a 288-amino-acid chain: Acetyl-coenzyme A carboxylase carboxyl transferase subunit beta (288 aa).

The CoA carboxyltransferase N-terminal domain maps to 34 to 288 (LFAKCPACKH…HLVAFHGGGQ (255 aa)). Positions 38, 41, 56, and 59 each coordinate Zn(2+). A C4-type zinc finger spans residues 38–59 (CPACKHMIYKKDLGLAKICPTC).

Belongs to the AccD/PCCB family. Acetyl-CoA carboxylase is a heterohexamer composed of biotin carboxyl carrier protein (AccB), biotin carboxylase (AccC) and two subunits each of ACCase subunit alpha (AccA) and ACCase subunit beta (AccD). The cofactor is Zn(2+).

The protein resides in the cytoplasm. The enzyme catalyses N(6)-carboxybiotinyl-L-lysyl-[protein] + acetyl-CoA = N(6)-biotinyl-L-lysyl-[protein] + malonyl-CoA. The protein operates within lipid metabolism; malonyl-CoA biosynthesis; malonyl-CoA from acetyl-CoA: step 1/1. Functionally, component of the acetyl coenzyme A carboxylase (ACC) complex. Biotin carboxylase (BC) catalyzes the carboxylation of biotin on its carrier protein (BCCP) and then the CO(2) group is transferred by the transcarboxylase to acetyl-CoA to form malonyl-CoA. In Streptococcus pyogenes serotype M3 (strain ATCC BAA-595 / MGAS315), this protein is Acetyl-coenzyme A carboxylase carboxyl transferase subunit beta.